Consider the following 283-residue polypeptide: Tetraspanin-33 (283 aa).

Over 1 to 24 (MARRPGAPAAYGEDFSFVSPLVKY) the chain is Cytoplasmic. Residues 25-45 (LLFFFNMLFWVISMVMVAVGV) traverse the membrane as a helical segment. Topologically, residues 46–64 (YARLMKHEEAALACLAVDP) are extracellular. The helical transmembrane segment at 65-85 (AILLIVVGILMFLLTFCGCIG) threads the bilayer. Topologically, residues 86 to 96 (SLRENICLLQT) are cytoplasmic. Residues 97–117 (FSLCLTVVFLLQLAAGVLGFV) form a helical membrane-spanning segment. Residues 118–235 (FSDKVRGKVS…DRLVNWIHSN (118 aa)) lie on the Extracellular side of the membrane. Intrachain disulfides connect Cys-156–Cys-224, Cys-157–Cys-189, Cys-173–Cys-183, and Cys-190–Cys-203. Asn-172 carries an N-linked (GlcNAc...) asparagine glycan. A helical membrane pass occupies residues 236 to 256 (LFVLGGVALGLAIPQLVGIML). Topologically, residues 257–283 (SMILVSQIKDQIKLQLYNQQHRADPWY) are cytoplasmic.

This sequence belongs to the tetraspanin (TM4SF) family. As to quaternary structure, homodimer; disulfide-linked. Interacts (via extracellular domain) with ADAM10 (via extracellular domain). Interacts (via cytoplasmic domain) with PLEKHA7 (via WW domains); the interaction is dependent on PDZD11 being bound to PLEKHA7 and facilitates the docking of ADAM10 to zonula adherens.

It localises to the cell membrane. It is found in the cell junction. The protein resides in the adherens junction. The protein localises to the cytoplasm. Its function is as follows. Part of TspanC8 subgroup, composed of 6 members that interact with the transmembrane metalloprotease ADAM10. This interaction is required for ADAM10 exit from the endoplasmic reticulum and for enzymatic maturation and trafficking to the cell surface as well as substrate specificity. Different TspanC8/ADAM10 complexes have distinct substrates. Plays an important role in normal erythropoiesis. It has a role in the differentiation of erythroid progenitors. Negatively regulates ligand-induced Notch activity probably by regulating ADAM10 activity. Mediates docking of ADAM10 to zonula adherens by interacting with ADAM10 and, in a PDZD11-dependent manner, with the zonula adherens protein PLEKHA7. This Bos taurus (Bovine) protein is Tetraspanin-33 (TSPAN33).